The sequence spans 30 residues: V-type proton ATPase catalytic subunit A isoform 2 (30 aa).

This sequence belongs to the ATPase alpha/beta chains family. In terms of assembly, V-ATPase is a heteromultimeric enzyme composed of a peripheral catalytic V1 complex (main components: subunits A, B, C, D, E, and F) attached to an integral membrane V0 proton pore complex (main component: the proteolipid protein).

It catalyses the reaction ATP + H2O + 4 H(+)(in) = ADP + phosphate + 5 H(+)(out). Its function is as follows. Catalytic subunit of the peripheral V1 complex of vacuolar ATPase. V-ATPase vacuolar ATPase is responsible for acidifying a variety of intracellular compartments in eukaryotic cells. The chain is V-type proton ATPase catalytic subunit A isoform 2 from Equisetum arvense (Field horsetail).